A 185-amino-acid chain; its full sequence is ATP-dependent protease subunit HslV (185 aa).

Threonine 12 is a catalytic residue. Residues alanine 168, cysteine 171, and threonine 174 each contribute to the Na(+) site.

It belongs to the peptidase T1B family. HslV subfamily. As to quaternary structure, a double ring-shaped homohexamer of HslV is capped on each side by a ring-shaped HslU homohexamer. The assembly of the HslU/HslV complex is dependent on binding of ATP.

Its subcellular location is the cytoplasm. It catalyses the reaction ATP-dependent cleavage of peptide bonds with broad specificity.. Its activity is regulated as follows. Allosterically activated by HslU binding. Protease subunit of a proteasome-like degradation complex believed to be a general protein degrading machinery. This Cereibacter sphaeroides (strain ATCC 17025 / ATH 2.4.3) (Rhodobacter sphaeroides) protein is ATP-dependent protease subunit HslV.